We begin with the raw amino-acid sequence, 604 residues long: Aspartate--tRNA(Asp/Asn) ligase (604 aa).

Glu-169 serves as a coordination point for L-aspartate. Residues 193–196 (QLFK) form an aspartate region. Arg-215 contributes to the L-aspartate binding site. ATP is bound by residues 215-217 (RDE) and Gln-224. His-456 provides a ligand contact to L-aspartate. Glu-490 is an ATP binding site. Arg-497 contributes to the L-aspartate binding site. 542–545 (GWDR) contacts ATP. The segment at 571 to 604 (PLTGAPAPITAQQRKEAGVDAQPEPKQAEAEPEA) is disordered.

This sequence belongs to the class-II aminoacyl-tRNA synthetase family. Type 1 subfamily. In terms of assembly, homodimer.

The protein localises to the cytoplasm. It carries out the reaction tRNA(Asx) + L-aspartate + ATP = L-aspartyl-tRNA(Asx) + AMP + diphosphate. Functionally, aspartyl-tRNA synthetase with relaxed tRNA specificity since it is able to aspartylate not only its cognate tRNA(Asp) but also tRNA(Asn). Reaction proceeds in two steps: L-aspartate is first activated by ATP to form Asp-AMP and then transferred to the acceptor end of tRNA(Asp/Asn). In Micrococcus luteus (strain ATCC 4698 / DSM 20030 / JCM 1464 / CCM 169 / CCUG 5858 / IAM 1056 / NBRC 3333 / NCIMB 9278 / NCTC 2665 / VKM Ac-2230) (Micrococcus lysodeikticus), this protein is Aspartate--tRNA(Asp/Asn) ligase.